A 698-amino-acid polypeptide reads, in one-letter code: Polyribonucleotide nucleotidyltransferase (698 aa).

Mg(2+) is bound by residues Asp-485 and Asp-491. In terms of domain architecture, KH spans 552–612 (PRVEMMTIPE…SDLKGAKSIV (61 aa)). Residues 622–690 (GMVYDGTVKK…KLGRLNLSYV (69 aa)) form the S1 motif domain.

It belongs to the polyribonucleotide nucleotidyltransferase family. Mg(2+) serves as cofactor.

It is found in the cytoplasm. It carries out the reaction RNA(n+1) + phosphate = RNA(n) + a ribonucleoside 5'-diphosphate. Involved in mRNA degradation. Catalyzes the phosphorolysis of single-stranded polyribonucleotides processively in the 3'- to 5'-direction. The chain is Polyribonucleotide nucleotidyltransferase from Treponema denticola (strain ATCC 35405 / DSM 14222 / CIP 103919 / JCM 8153 / KCTC 15104).